We begin with the raw amino-acid sequence, 178 residues long: CASP-like protein 5A1 (178 aa).

Positions 1–11 (MFASRPAVHPV) are enriched in low complexity. The disordered stretch occupies residues 1-25 (MFASRPAVHPVEAPPPPDPAEQPRG). Residues 1 to 37 (MFASRPAVHPVEAPPPPDPAEQPRGVLMKDLPGMPGT) are Cytoplasmic-facing. A helical membrane pass occupies residues 38 to 58 (AGGLGLRLAQFAFAAVALAVM). Residues 59 to 69 (ASTNDFPSVTS) are Extracellular-facing. Residues 70–90 (FCFLVAAAILQCLWSFSLAIV) traverse the membrane as a helical segment. Residues 91 to 105 (DIYALLVKRCLRNRR) lie on the Cytoplasmic side of the membrane. A helical transmembrane segment spans residues 106–126 (AVCLFAIGDGITAALTFSAAC). Residues 127–152 (ASSGITVLIDNDLDLCSENHCASFES) lie on the Extracellular side of the membrane. Residues 153–173 (ATAMAFLSWFALSPSFLLNFW) traverse the membrane as a helical segment. Residues 174 to 178 (SMASG) lie on the Cytoplasmic side of the membrane.

The protein belongs to the Casparian strip membrane proteins (CASP) family. Homodimer and heterodimers.

Its subcellular location is the cell membrane. This is CASP-like protein 5A1 from Oryza sativa subsp. japonica (Rice).